The sequence spans 634 residues: Chaperone protein DnaK (634 aa).

Thr-198 bears the Phosphothreonine; by autocatalysis mark. The tract at residues 599-634 (KQTQEGAEAASEAGEQSAGDEGVVDAEFEEVDEQNK) is disordered. The segment covering 602–619 (QEGAEAASEAGEQSAGDE) has biased composition (low complexity). Acidic residues predominate over residues 620-634 (GVVDAEFEEVDEQNK).

Belongs to the heat shock protein 70 family.

In terms of biological role, acts as a chaperone. The sequence is that of Chaperone protein DnaK from Syntrophotalea carbinolica (strain DSM 2380 / NBRC 103641 / GraBd1) (Pelobacter carbinolicus).